We begin with the raw amino-acid sequence, 216 residues long: Phosducin-like protein 3 (216 aa).

The stretch at 13–59 (AKTIEQQLDQQLDRLDNLDSDDLKVLREQRLREMKDLNNKKQEWLRN) forms a coiled coil. Positions 29-163 (NLDSDDLKVL…DLGNCDDFAT (135 aa)) constitute a Phosducin domain.

This sequence belongs to the phosducin family. Highly expressed in germline cells of the testis from the spermatogonia stage until the early spermatid stage but is no longer observed in late-stage spermatids in the distal end of the testis.

It catalyses the reaction [thioredoxin]-dithiol + NADP(+) = [thioredoxin]-disulfide + NADPH + H(+). Its function is as follows. Has redox activity with thioredoxin. Required for male fertility and maturation of sperm past the canoe stage during spermiogenesis. The protein is Phosducin-like protein 3 of Drosophila melanogaster (Fruit fly).